The primary structure comprises 105 residues: Guanidinium exporter (105 aa).

Position 1 (M1) is a topological domain, cytoplasmic. The chain crosses the membrane as a helical span at residues 2–19; it reads SWIVLLIAGLLEVVWAIG. Residues 20–28 lie on the Periplasmic side of the membrane; sequence LKYTHGFTR. A helical membrane pass occupies residues 29-48; it reads LTPSIITIAAMIVSIAMLSW. The Cytoplasmic segment spans residues 49–54; the sequence is AMRTLP. A helical membrane pass occupies residues 55-77; sequence VGTAYAVWTGIGAVGAAITGILL. Residues 78 to 86 lie on the Periplasmic side of the membrane; it reads LGESASPAR. A helical membrane pass occupies residues 87-104; sequence LLSLGLIVAGIIGLKLST. Position 105 (H105) is a topological domain, cytoplasmic.

Belongs to the drug/metabolite transporter (DMT) superfamily. Small multidrug resistance (SMR) (TC 2.A.7.1) family. Gdx/SugE subfamily.

The protein localises to the cell inner membrane. Functionally, guanidinium ion exporter. Couples guanidinium export to the proton motive force, exchanging one guanidinium ion for two protons. This Citrobacter freundii protein is Guanidinium exporter.